The following is a 231-amino-acid chain: Protein APE_1056.1 (231 aa).

The AMMECR1 domain occupies 29–214; the sequence is VRIARRAVEE…ETEPRGPVVR (186 aa).

The polypeptide is Protein APE_1056.1 (Aeropyrum pernix (strain ATCC 700893 / DSM 11879 / JCM 9820 / NBRC 100138 / K1)).